We begin with the raw amino-acid sequence, 264 residues long: 3-methyl-2-oxobutanoate hydroxymethyltransferase (264 aa).

2 residues coordinate Mg(2+): Asp-46 and Asp-85. Residues 46 to 47 (DS), Asp-85, and Lys-113 each bind 3-methyl-2-oxobutanoate. Mg(2+) is bound at residue Glu-115. The active-site Proton acceptor is Glu-181.

The protein belongs to the PanB family. As to quaternary structure, homodecamer; pentamer of dimers. It depends on Mg(2+) as a cofactor.

The protein localises to the cytoplasm. The enzyme catalyses 3-methyl-2-oxobutanoate + (6R)-5,10-methylene-5,6,7,8-tetrahydrofolate + H2O = 2-dehydropantoate + (6S)-5,6,7,8-tetrahydrofolate. It functions in the pathway cofactor biosynthesis; (R)-pantothenate biosynthesis; (R)-pantoate from 3-methyl-2-oxobutanoate: step 1/2. Catalyzes the reversible reaction in which hydroxymethyl group from 5,10-methylenetetrahydrofolate is transferred onto alpha-ketoisovalerate to form ketopantoate. The chain is 3-methyl-2-oxobutanoate hydroxymethyltransferase from Salmonella typhi.